A 245-amino-acid polypeptide reads, in one-letter code: 1-(5-phosphoribosyl)-5-[(5-phosphoribosylamino)methylideneamino] imidazole-4-carboxamide isomerase (245 aa).

The active-site Proton acceptor is D7. Residue D129 is the Proton donor of the active site.

The protein belongs to the HisA/HisF family.

It localises to the cytoplasm. The catalysed reaction is 1-(5-phospho-beta-D-ribosyl)-5-[(5-phospho-beta-D-ribosylamino)methylideneamino]imidazole-4-carboxamide = 5-[(5-phospho-1-deoxy-D-ribulos-1-ylimino)methylamino]-1-(5-phospho-beta-D-ribosyl)imidazole-4-carboxamide. It functions in the pathway amino-acid biosynthesis; L-histidine biosynthesis; L-histidine from 5-phospho-alpha-D-ribose 1-diphosphate: step 4/9. This is 1-(5-phosphoribosyl)-5-[(5-phosphoribosylamino)methylideneamino] imidazole-4-carboxamide isomerase from Shewanella sp. (strain MR-4).